The following is a 171-amino-acid chain: MKRTKKYPFLTLQRQRFHLNFENASSAAGIPAERDFYRWAWSALKNEYRRADISLILLDEEEARAYNRDYRGKDYATNVLSFALNEGEILPCQVSEKLYGDLIICPQVVLKEAAEQGKTPERHFAHLTIHGVLHLMGYDHIEDDEAEIMEAEEIRLMLAAGFPNPYQEDEY.

The Zn(2+) site is built by histidine 130, histidine 134, and histidine 140.

This sequence belongs to the endoribonuclease YbeY family. Zn(2+) serves as cofactor.

Its subcellular location is the cytoplasm. Functionally, single strand-specific metallo-endoribonuclease involved in late-stage 70S ribosome quality control and in maturation of the 3' terminus of the 16S rRNA. This Neisseria meningitidis serogroup C / serotype 2a (strain ATCC 700532 / DSM 15464 / FAM18) protein is Endoribonuclease YbeY.